Consider the following 491-residue polypeptide: Histamine H1 receptor (491 aa).

Residues 1-30 are Extracellular-facing; the sequence is MTCPNSSCVFEDKMCQGNKTAPANDAQLTP. N-linked (GlcNAc...) asparagine glycans are attached at residues Asn5 and Asn18. The helical transmembrane segment at 31-51 threads the bilayer; sequence LVVVLSTISLVTVGLNLLVLY. The Cytoplasmic portion of the chain corresponds to 52–65; the sequence is AVRSERKLHTVGNL. A helical membrane pass occupies residues 66–90; the sequence is YIVSLSVADLIVGVVVMPMNILYLL. Over 91-98 the chain is Extracellular; that stretch reads MSRWSLGR. A helical membrane pass occupies residues 99 to 124; the sequence is PLCLFWLSMDYVASTASIFSVFILCI. Cys101 and Cys181 are oxidised to a cystine. The histamine site is built by Asp108 and Thr113. The important for agonist binding stretch occupies residues 108 to 113; that stretch reads DYVAST. Over 125-145 the chain is Cytoplasmic; the sequence is DRYRSVQQPLKYLRYRTKTRA. 2 positions are modified to phosphothreonine: Thr141 and Thr143. Residues 146–165 form a helical membrane-spanning segment; the sequence is SITILAAWFLSFLWIIPILG. Residues 166-189 lie on the Extracellular side of the membrane; that stretch reads WRHFQPKTPEPREDKCETDFYNVT. Residues 190–212 form a helical membrane-spanning segment; the sequence is WFKVMTAIINFYLPTLLMLWFYA. Asn199 is a histamine binding site. Residues 213–420 are Cytoplasmic-facing; sequence KIYKAVRQHC…MNRERKAAKQ (208 aa). Phosphoserine is present on Ser231. Disordered regions lie at residues 246–297 and 360–385; these read QVGA…KEEK and QSFSRTDSDTPAEPAPAKGKSRSESS. The segment covering 252–262 has biased composition (basic and acidic residues); it reads PGKESPWEVLK. 3 positions are modified to phosphoserine: Ser384, Ser400, and Ser402. Residues 421–444 traverse the membrane as a helical segment; that stretch reads LGFIMAAFIICWIPYFIFFMVIAF. The tract at residues 428 to 432 is important for agonist binding; it reads FIICW. Residue Tyr435 participates in histamine binding. Residues Cys445 and Cys448 are joined by a disulfide bond. Residues 445-450 are Extracellular-facing; that stretch reads CESCCN. A helical membrane pass occupies residues 451 to 473; it reads QHVHMFTIWLGYINSTLNPLIYP. Residues 474-491 are Cytoplasmic-facing; that stretch reads LCNENFKKTFKKILHIRS.

The protein belongs to the G-protein coupled receptor 1 family. In terms of processing, phosphorylation at sites in the second and third cytoplasmic loops independently contribute to agonist-induced receptor down-regulation. Brain, lung, small intestine, uterus, adrenal medulla and spleen.

Its subcellular location is the cell membrane. Its function is as follows. G-protein-coupled receptor for histamine, a biogenic amine that functions as an immune modulator and a neurotransmitter. Through the H1 receptor, histamine mediates the contraction of smooth muscles and increases capillary permeability due to contraction of terminal venules. Also mediates neurotransmission in the central nervous system and thereby regulates circadian rhythms, emotional and locomotor activities as well as cognitive functions. The polypeptide is Histamine H1 receptor (Bos taurus (Bovine)).